Reading from the N-terminus, the 176-residue chain is Translation initiation factor IF-3 (176 aa).

Belongs to the IF-3 family. Monomer.

The protein resides in the cytoplasm. IF-3 binds to the 30S ribosomal subunit and shifts the equilibrium between 70S ribosomes and their 50S and 30S subunits in favor of the free subunits, thus enhancing the availability of 30S subunits on which protein synthesis initiation begins. This is Translation initiation factor IF-3 from Streptococcus pyogenes serotype M4 (strain MGAS10750).